Consider the following 247-residue polypeptide: MEYHPDLENLDEDGYTQLHFDSRSNTRIAVVSEKGSCVASPPWRLIAVILGILCLVILVIAVVLGTMAIWRPNSGRNSLENGYFPSRNKENHSQPTQSPLEESVTPTKAVKTTGVLSSPCPPNWIIYEKSCYLFSPSLNSWDQSKRQCSQLGSNLIKIDSSKELGFIVKQVSSQPDNSFWIGLSRPQTEVPWLWEDGSTFSSNLFQIRTTATQENPSPNCVWIHVSVIYDQLCSVPSCSICEKKFSM.

Residues 1 to 44 (MEYHPDLENLDEDGYTQLHFDSRSNTRIAVVSEKGSCVASPPWR) lie on the Cytoplasmic side of the membrane. The short motif at 15–18 (YTQL) is the ITAM-like element. Residues 45–65 (LIAVILGILCLVILVIAVVLG) traverse the membrane as a helical; Signal-anchor for type II membrane protein segment. Residues 66–247 (TMAIWRPNSG…CSICEKKFSM (182 aa)) lie on the Extracellular side of the membrane. Residues 81 to 105 (NGYFPSRNKENHSQPTQSPLEESVT) are disordered. An N-linked (GlcNAc...) asparagine glycan is attached at Asn-91. Residues 93–105 (SQPTQSPLEESVT) show a composition bias toward polar residues. Disulfide bonds link Cys-120-Cys-131, Cys-148-Cys-241, and Cys-220-Cys-233. In terms of domain architecture, C-type lectin spans 127-242 (YEKSCYLFSP…CSVPSCSICE (116 aa)). 146–153 (RQCSQLGS) contributes to the (1,3-beta-D-glucosyl)n binding site. Residues Lys-157, Asp-159, and Glu-163 each contribute to the a divalent metal cation site. Glu-195 is a binding site for (1,3-beta-D-glucosyl)n. Position 242 (Glu-242) interacts with a divalent metal cation.

As to quaternary structure, homodimer. Interacts with SYK; participates in leukocyte activation in presence of fungal pathogens. Interacts with CD37; this interaction controls CLEC7A-mediated IL-6 production. Post-translationally, phosphorylated on tyrosine residues in response to beta-glucan binding. As to expression, detected in dendritic cells, in paracortical and medullary regions of lymph nodes, and in spleen red pulp and white pulp.

The protein localises to the cell membrane. Lectin that functions as a pattern recognizing receptor (PRR) specific for beta-1,3-linked and beta-1,6-linked glucans, which constitute cell wall constituents from pathogenic bacteria and fungi. Necessary for the TLR2-mediated inflammatory response and activation of NF-kappa-B: upon beta-glucan binding, recruits SYK via its ITAM motif and promotes a signaling cascade that activates some CARD domain-BCL10-MALT1 (CBM) signalosomes, leading to the activation of NF-kappa-B and MAP kinase p38 (MAPK11, MAPK12, MAPK13 and/or MAPK14) pathways which stimulate expression of genes encoding pro-inflammatory cytokines and chemokines. Enhances cytokine production in macrophages and dendritic cells. Mediates production of reactive oxygen species in the cell. Mediates phagocytosis of C.albicans conidia. Binds T-cells in a way that does not involve their surface glycans and plays a role in T-cell activation. Stimulates T-cell proliferation. Induces phosphorylation of SCIMP after binding beta-glucans. This chain is C-type lectin domain family 7 member A (CLEC7A), found in Macaca mulatta (Rhesus macaque).